We begin with the raw amino-acid sequence, 73 residues long: DNA-directed RNA polymerase subunit epsilon (73 aa).

It belongs to the RNA polymerase subunit epsilon family. In terms of assembly, RNAP is composed of a core of 2 alpha, a beta and a beta' subunit. The core is associated with a delta subunit, and at least one of epsilon or omega. When a sigma factor is associated with the core the holoenzyme is formed, which can initiate transcription.

It carries out the reaction RNA(n) + a ribonucleoside 5'-triphosphate = RNA(n+1) + diphosphate. Functionally, a non-essential component of RNA polymerase (RNAP). The polypeptide is DNA-directed RNA polymerase subunit epsilon (Lactobacillus helveticus (strain DPC 4571)).